We begin with the raw amino-acid sequence, 496 residues long: Cytochrome f, chloroplastic (496 aa).

Residues 1–149 (MASLQTPVMV…VGAAAGSANA (149 aa)) constitute a chloroplast transit peptide. Heme contacts are provided by Tyr150, Cys170, Cys173, and His174. A helical membrane pass occupies residues 462 to 481 (VQAFLFFSFTVLATQTLLVV).

The protein belongs to the cytochrome f family. Interacts with plastocyanin and Rieske iron-sulfur protein. It depends on heme as a cofactor.

The protein resides in the plastid. It is found in the chloroplast thylakoid membrane. Its function is as follows. Translocates protons across the thylakoid membrane and transfers electrons from photosystem II to photosystem I. It receives electrons from the Rieske iron-sulfur protein and passes them to plastocyanin. The chain is Cytochrome f, chloroplastic (petA) from Euglena gracilis.